The primary structure comprises 196 residues: Late protein I196L (196 aa).

Tandem repeats lie at residues 28–48 and 49–70. The stretch at 71 to 92 is one 3; approximate repeat; that stretch reads SNYLTSAISTNISDKEEDTPFS.

This sequence belongs to the asfivirus I196L family.

This chain is Late protein I196L, found in African swine fever virus (isolate Warthog/Namibia/Wart80/1980) (ASFV).